The sequence spans 285 residues: NAD kinase (285 aa).

Aspartate 66 (proton acceptor) is an active-site residue. NAD(+)-binding positions include 66 to 67 (DG), 137 to 138 (ND), arginine 148, arginine 165, aspartate 167, and 178 to 183 (TAYSLS).

The protein belongs to the NAD kinase family. A divalent metal cation serves as cofactor.

The protein localises to the cytoplasm. The catalysed reaction is NAD(+) + ATP = ADP + NADP(+) + H(+). Involved in the regulation of the intracellular balance of NAD and NADP, and is a key enzyme in the biosynthesis of NADP. Catalyzes specifically the phosphorylation on 2'-hydroxyl of the adenosine moiety of NAD to yield NADP. The polypeptide is NAD kinase (Chlorobium phaeobacteroides (strain BS1)).